An 872-amino-acid polypeptide reads, in one-letter code: Leucine--tRNA ligase (872 aa).

Positions 42–52 (PYPSGKLHMGH) match the 'HIGH' region motif. The short motif at 632–636 (KMSKS) is the 'KMSKS' region element. ATP is bound at residue Lys-635.

Belongs to the class-I aminoacyl-tRNA synthetase family.

The protein localises to the cytoplasm. It carries out the reaction tRNA(Leu) + L-leucine + ATP = L-leucyl-tRNA(Leu) + AMP + diphosphate. In Chromobacterium violaceum (strain ATCC 12472 / DSM 30191 / JCM 1249 / CCUG 213 / NBRC 12614 / NCIMB 9131 / NCTC 9757 / MK), this protein is Leucine--tRNA ligase.